Here is a 137-residue protein sequence, read N- to C-terminus: Large ribosomal subunit protein uL13 (137 aa).

This sequence belongs to the universal ribosomal protein uL13 family. In terms of assembly, part of the 50S ribosomal subunit.

Functionally, this protein is one of the early assembly proteins of the 50S ribosomal subunit, although it is not seen to bind rRNA by itself. It is important during the early stages of 50S assembly. The chain is Large ribosomal subunit protein uL13 from Methanocaldococcus jannaschii (strain ATCC 43067 / DSM 2661 / JAL-1 / JCM 10045 / NBRC 100440) (Methanococcus jannaschii).